Here is a 514-residue protein sequence, read N- to C-terminus: Sugar transport protein 3 (514 aa).

Residues 1–19 lie on the Cytoplasmic side of the membrane; it reads MVAEEARKEAMAKSVSGGK. The next 12 helical transmembrane spans lie at 20–40, 87–107, 124–144, 147–167, 174–194, 207–227, 289–309, 327–347, 356–376, 392–412, 430–450, and 456–476; these read ITYF…IFGY, LLTS…LLAS, VSFL…MLII, LLLG…LSEM, GAIS…ANVI, ISLA…LFLP, LVMA…VVAF, MSTL…MLVV, FLIG…IVMV, VVVL…PLGW, VTVA…PPML, and GIFF…QLFL. Residues 477–514 are Cytoplasmic-facing; that stretch reads PETKNVPIEKVVGLWEKHWFWRRMTSKRDIQETTILSH.

This sequence belongs to the major facilitator superfamily. Sugar transporter (TC 2.A.1.1) family.

It localises to the membrane. In terms of biological role, mediates an active uptake of hexoses, probably by sugar/hydrogen symport. This chain is Sugar transport protein 3 (STP3), found in Arabidopsis thaliana (Mouse-ear cress).